The primary structure comprises 258 residues: Ribosomal RNA small subunit methyltransferase J (258 aa).

S-adenosyl-L-methionine contacts are provided by residues 107-108, 123-124, 159-160, and Asp-177; these read RD, ER, and SS.

Belongs to the methyltransferase superfamily. RsmJ family.

Its subcellular location is the cytoplasm. The catalysed reaction is guanosine(1516) in 16S rRNA + S-adenosyl-L-methionine = N(2)-methylguanosine(1516) in 16S rRNA + S-adenosyl-L-homocysteine + H(+). Functionally, specifically methylates the guanosine in position 1516 of 16S rRNA. The polypeptide is Ribosomal RNA small subunit methyltransferase J (Shewanella sediminis (strain HAW-EB3)).